The following is a 115-amino-acid chain: Large ribosomal subunit protein bL20 (115 aa).

The protein belongs to the bacterial ribosomal protein bL20 family.

Its function is as follows. Binds directly to 23S ribosomal RNA and is necessary for the in vitro assembly process of the 50S ribosomal subunit. It is not involved in the protein synthesizing functions of that subunit. The sequence is that of Large ribosomal subunit protein bL20 from Borrelia hermsii (strain HS1 / DAH).